Here is a 121-residue protein sequence, read N- to C-terminus: Large ribosomal subunit protein bL12 (121 aa).

This sequence belongs to the bacterial ribosomal protein bL12 family. As to quaternary structure, homodimer. Part of the ribosomal stalk of the 50S ribosomal subunit. Forms a multimeric L10(L12)X complex, where L10 forms an elongated spine to which 2 to 4 L12 dimers bind in a sequential fashion. Binds GTP-bound translation factors.

Its function is as follows. Forms part of the ribosomal stalk which helps the ribosome interact with GTP-bound translation factors. Is thus essential for accurate translation. The chain is Large ribosomal subunit protein bL12 from Halalkalibacterium halodurans (strain ATCC BAA-125 / DSM 18197 / FERM 7344 / JCM 9153 / C-125) (Bacillus halodurans).